Reading from the N-terminus, the 1317-residue chain is Toxin protein Tse5 (1317 aa).

The interval 395–419 (GRETRRRRDGQGRMLEEESPGKARY) is disordered. Positions 403–415 (DGQGRMLEEESPG) are enriched in basic and acidic residues.

Its function is as follows. Toxin secreted by the H1 type VI (H1-T6SS) secretion system that acts on bacterial target cells. The producing bacterium is protected by a cognate immunity protein. The sequence is that of Toxin protein Tse5 from Pseudomonas aeruginosa (strain ATCC 15692 / DSM 22644 / CIP 104116 / JCM 14847 / LMG 12228 / 1C / PRS 101 / PAO1).